Consider the following 433-residue polypeptide: Epi-neemfruitin B synthase L1AT (433 aa).

Active-site proton acceptor residues include His151 and Asp372.

Belongs to the plant acyltransferase family. In terms of assembly, monomer. In terms of tissue distribution, mainly expressed in petioles and, to a lower extent, in roots.

The enzyme catalyses (21S)-21-acetyl-1-hydroxy-apo-melianone + acetyl-CoA = epi-neemfruitin B + acetate + CoA + H(+). The protein operates within secondary metabolite biosynthesis; terpenoid biosynthesis. Functionally, acetyltransferase involved in the biosynthesis of limonoids triterpene natural products such as azadirachtin, an antifeedant widely used as bioinsecticide, and possessing many medicinal applications including anti-tumoral, anti-malarial, anti-rheumatic, antibacterial, anti-inflammatory, anti-pyretic and diuretic effects. Catalyzes the formation of epi-neemfruitin B from (21S)-21-acetyl-1-hydroxy-apo-melianone. In Melia azedarach (Chinaberry tree), this protein is Epi-neemfruitin B synthase L1AT.